The chain runs to 400 residues: MKNYHAPDEKGFFGEHGGLYVSETLIPALKELEQAYNEAKNDPEFWAEFRRDLKHYVGRPSPVYHAARLSEHLGGAQIWLKREDLNHTGAHKVNNTIGQALLARRMGKKRVIAETGAGQHGVASATVAARFGMTCDVYMGADDIQRQMPNVFRMKLLGANVIGVDSGSRTLKDAMNEAMREWVARVDDTFYIIGTAAGPAPYPEMVRDFQCVIGNEAKAQMQEAIGRQPDVAVACVGGGSNAIGLFYPYIEEENVRLVGVEAGGLGVDTPDHAAPITSGAPIGVLHGFRSYLMQDENGQVLGTHSVSAGLDYPGIGPEHSHLHDIKRVEYTVAKDDEALEAFDLLCRFEGIIPALESSHAVAWAVKNAPKMGKDQVILVNLSGRGDKDINTVAKLKGIEL.

Lys-92 carries the post-translational modification N6-(pyridoxal phosphate)lysine.

This sequence belongs to the TrpB family. Tetramer of two alpha and two beta chains. It depends on pyridoxal 5'-phosphate as a cofactor.

It catalyses the reaction (1S,2R)-1-C-(indol-3-yl)glycerol 3-phosphate + L-serine = D-glyceraldehyde 3-phosphate + L-tryptophan + H2O. Its pathway is amino-acid biosynthesis; L-tryptophan biosynthesis; L-tryptophan from chorismate: step 5/5. In terms of biological role, the beta subunit is responsible for the synthesis of L-tryptophan from indole and L-serine. The sequence is that of Tryptophan synthase beta chain from Neisseria gonorrhoeae (strain NCCP11945).